Reading from the N-terminus, the 212-residue chain is Ras-related protein Rab-15 (212 aa).

The GTP site is built by serine 17, glycine 18, valine 19, glycine 20, lysine 21, threonine 22, cysteine 23, serine 35, serine 39, and threonine 40. Threonine 22 contacts Mg(2+). Short sequence motifs (switch) lie at residues 31 to 45 (NEFH…GVDF) and 63 to 80 (DTAG…YYRR). Residues threonine 40 and aspartate 63 each contribute to the Mg(2+) site. GTP-binding residues include glycine 66, asparagine 121, lysine 122, aspartate 124, serine 151, and alanine 152. S-geranylgeranyl cysteine attachment occurs at residues cysteine 210 and cysteine 212. Cysteine 212 bears the Cysteine methyl ester mark.

This sequence belongs to the small GTPase superfamily. Rab family. As to quaternary structure, the GTP bound form of RAB15 interacts with REP15. Interacts (GTP-bound form) with MICAL1, MICAL3, MICALCL, EHBP1 and EHBP1L1. Mg(2+) is required as a cofactor. Expressed predominantly in neural tissues.

The protein localises to the cell membrane. It carries out the reaction GTP + H2O = GDP + phosphate + H(+). With respect to regulation, regulated by guanine nucleotide exchange factors (GEFs) which promote the exchange of bound GDP for free GTP. Regulated by GTPase activating proteins (GAPs) which increase the GTP hydrolysis activity. Inhibited by GDP dissociation inhibitors (GDIs). Its function is as follows. The small GTPases Rab are key regulators of intracellular membrane trafficking, from the formation of transport vesicles to their fusion with membranes. Rabs cycle between an inactive GDP-bound form and an active GTP-bound form that is able to recruit to membranes different sets of downstream effectors directly responsible for vesicle formation, movement, tethering and fusion. RAB15 may act in concert with RAB3A in regulating aspects of synaptic vesicle membrane flow within the nerve terminal. The sequence is that of Ras-related protein Rab-15 from Rattus norvegicus (Rat).